Reading from the N-terminus, the 320-residue chain is Cytochrome f (320 aa).

An N-terminal signal peptide occupies residues 1–32; that stretch reads MKTKKSYDKVTRWVTPPILMLIIIHIITGACS. Residues Tyr-36, Cys-56, Cys-59, and His-60 each contribute to the heme site. The helical transmembrane segment at 286-306 threads the bilayer; that stretch reads IQGLLGFLASVVLAQIFLVLK.

This sequence belongs to the cytochrome f family. In terms of assembly, the 4 large subunits of the cytochrome b6-f complex are cytochrome b6, subunit IV (17 kDa polypeptide, petD), cytochrome f and the Rieske protein, while the 4 small subunits are PetG, PetL, PetM and PetN. The complex functions as a dimer. It depends on heme as a cofactor.

It localises to the plastid. The protein resides in the chloroplast thylakoid membrane. In terms of biological role, component of the cytochrome b6-f complex, which mediates electron transfer between photosystem II (PSII) and photosystem I (PSI), cyclic electron flow around PSI, and state transitions. This Gnetum parvifolium (Small-leaved jointfir) protein is Cytochrome f.